The chain runs to 363 residues: Protein-glutamate methylesterase/protein-glutamine glutaminase 1 (363 aa).

The region spanning Lys-7–Glu-124 is the Response regulatory domain. Residue Asp-58 is modified to 4-aspartylphosphate. A CheB-type methylesterase domain is found at Phe-164–Gln-356. Residues Ser-176, His-202, and Asp-298 contribute to the active site.

Belongs to the CheB family. Phosphorylated by CheA. Phosphorylation of the N-terminal regulatory domain activates the methylesterase activity.

The protein resides in the cytoplasm. It catalyses the reaction [protein]-L-glutamate 5-O-methyl ester + H2O = L-glutamyl-[protein] + methanol + H(+). It carries out the reaction L-glutaminyl-[protein] + H2O = L-glutamyl-[protein] + NH4(+). Functionally, involved in chemotaxis. Part of a chemotaxis signal transduction system that modulates chemotaxis in response to various stimuli. Catalyzes the demethylation of specific methylglutamate residues introduced into the chemoreceptors (methyl-accepting chemotaxis proteins or MCP) by CheR. Also mediates the irreversible deamidation of specific glutamine residues to glutamic acid. The protein is Protein-glutamate methylesterase/protein-glutamine glutaminase 1 of Geobacter metallireducens (strain ATCC 53774 / DSM 7210 / GS-15).